The chain runs to 645 residues: UPF0313 protein CLM_0251 (645 aa).

The 272-residue stretch at alanine 295 to serine 566 folds into the Radical SAM core domain. [4Fe-4S] cluster-binding residues include cysteine 309, cysteine 313, and cysteine 316. The segment at asparagine 598 to lysine 645 is disordered. A compositionally biased stretch (basic residues) spans proline 600 to asparagine 609. Residues alanine 610–asparagine 624 are compositionally biased toward low complexity. Residues lysine 632–lysine 645 show a composition bias toward basic residues.

Belongs to the UPF0313 family. [4Fe-4S] cluster is required as a cofactor.

In Clostridium botulinum (strain Kyoto / Type A2), this protein is UPF0313 protein CLM_0251.